Here is a 981-residue protein sequence, read N- to C-terminus: GPI ethanolamine phosphate transferase 1 (981 aa).

Residues Met1–Arg6 are Cytoplasmic-facing. The helical transmembrane segment at Ile7–Ile27 threads the bilayer. The Lumenal portion of the chain corresponds to Tyr28–Arg464. N-linked (GlcNAc...) asparagine glycosylation is found at Asn148, Asn211, and Asn295. The chain crosses the membrane as a helical span at residues Ala465–Leu485. Over Tyr486–Arg496 the chain is Cytoplasmic. Residues Thr497–Ile517 form a helical membrane-spanning segment. Over Ser518–Lys519 the chain is Lumenal. Residues Ser520–Ala540 traverse the membrane as a helical segment. At Arg541 to Gly560 the chain is on the cytoplasmic side. The helical transmembrane segment at Ala561–Leu581 threads the bilayer. Over Ala582–Glu587 the chain is Lumenal. A helical membrane pass occupies residues Ile588–Leu608. The Cytoplasmic segment spans residues Arg609 to His611. Residues Leu612 to Pro632 traverse the membrane as a helical segment. The Lumenal portion of the chain corresponds to Ala633–Asp638. The chain crosses the membrane as a helical span at residues Ile639–Leu659. Residues Glu660 to Arg681 lie on the Cytoplasmic side of the membrane. Residues Thr682–Ala702 traverse the membrane as a helical segment. Topologically, residues Thr703–Lys708 are lumenal. Residues Leu709–Met729 form a helical membrane-spanning segment. The Cytoplasmic portion of the chain corresponds to Pro730–Arg744. Residues Leu745–Phe767 traverse the membrane as a helical segment. Residues Tyr768–Arg819 lie on the Lumenal side of the membrane. A helical transmembrane segment spans residues Ile820–Ser840. Over Ile841–Gly862 the chain is Cytoplasmic. Residues Ala863 to Leu883 form a helical membrane-spanning segment. Residues Asn884 to Ser892 are Lumenal-facing. The chain crosses the membrane as a helical span at residues Ala893 to Val913. Residues Lys914 to Phe929 are Cytoplasmic-facing. The chain crosses the membrane as a helical span at residues Ala930 to Ile950. The Lumenal segment spans residues Ala951–Glu981.

It belongs to the PIGG/PIGN/PIGO family. PIGN subfamily.

The protein resides in the endoplasmic reticulum membrane. The protein operates within glycolipid biosynthesis; glycosylphosphatidylinositol-anchor biosynthesis. Ethanolamine phosphate transferase involved in glycosylphosphatidylinositol-anchor biosynthesis. Transfers ethanolamine phosphate to the first alpha-1,4-linked mannose of the glycosylphosphatidylinositol precursor of GPI-anchor. This is GPI ethanolamine phosphate transferase 1 (MCD4) from Gibberella zeae (strain ATCC MYA-4620 / CBS 123657 / FGSC 9075 / NRRL 31084 / PH-1) (Wheat head blight fungus).